The primary structure comprises 72 residues: Small ribosomal subunit protein eS31 (72 aa).

Positions 32, 35, 51, and 54 each coordinate Zn(2+). Residues 32–54 (CPRCGSVMAYHKEPVPRWHCGKC) form a C4-type zinc finger.

The protein belongs to the eukaryotic ribosomal protein eS31 family. In terms of assembly, part of the 30S ribosomal subunit. The cofactor is Zn(2+).

In Caldivirga maquilingensis (strain ATCC 700844 / DSM 13496 / JCM 10307 / IC-167), this protein is Small ribosomal subunit protein eS31.